A 76-amino-acid chain; its full sequence is ATP synthase subunit c (76 aa).

Transmembrane regions (helical) follow at residues 12 to 32 (LGSI…GIIF) and 54 to 74 (ILGF…PFVY).

This sequence belongs to the ATPase C chain family. F-type ATPases have 2 components, F(1) - the catalytic core - and F(0) - the membrane proton channel. F(1) has five subunits: alpha(3), beta(3), gamma(1), delta(1), epsilon(1). F(0) has three main subunits: a(1), b(2) and c(10-14). The alpha and beta chains form an alternating ring which encloses part of the gamma chain. F(1) is attached to F(0) by a central stalk formed by the gamma and epsilon chains, while a peripheral stalk is formed by the delta and b chains.

The protein localises to the cell membrane. In terms of biological role, f(1)F(0) ATP synthase produces ATP from ADP in the presence of a proton or sodium gradient. F-type ATPases consist of two structural domains, F(1) containing the extramembraneous catalytic core and F(0) containing the membrane proton channel, linked together by a central stalk and a peripheral stalk. During catalysis, ATP synthesis in the catalytic domain of F(1) is coupled via a rotary mechanism of the central stalk subunits to proton translocation. Its function is as follows. Key component of the F(0) channel; it plays a direct role in translocation across the membrane. A homomeric c-ring of between 10-14 subunits forms the central stalk rotor element with the F(1) delta and epsilon subunits. The sequence is that of ATP synthase subunit c from Streptomyces coelicolor (strain ATCC BAA-471 / A3(2) / M145).